Here is a 785-residue protein sequence, read N- to C-terminus: 5-methyltetrahydropteroyltriglutamate--homocysteine methyltransferase (785 aa).

5-methyltetrahydropteroyltri-L-glutamate-binding positions include 15–18 and Lys121; that span reads RELK. Residues 460–462 and Glu513 contribute to the L-homocysteine site; that span reads IGS. L-methionine is bound by residues 460–462 and Glu513; that span reads IGS. 5-methyltetrahydropteroyltri-L-glutamate contacts are provided by residues 544–545 and Trp590; that span reads RC. Asp628 contacts L-homocysteine. Asp628 provides a ligand contact to L-methionine. Glu634 serves as a coordination point for 5-methyltetrahydropteroyltri-L-glutamate. The Zn(2+) site is built by His670, Cys672, and Glu694. The active-site Proton donor is the His723. Cys755 serves as a coordination point for Zn(2+).

It belongs to the vitamin-B12 independent methionine synthase family. Zn(2+) serves as cofactor.

The catalysed reaction is 5-methyltetrahydropteroyltri-L-glutamate + L-homocysteine = tetrahydropteroyltri-L-glutamate + L-methionine. Its pathway is amino-acid biosynthesis; L-methionine biosynthesis via de novo pathway; L-methionine from L-homocysteine (MetE route): step 1/1. In terms of biological role, catalyzes the transfer of a methyl group from 5-methyltetrahydrofolate to homocysteine resulting in methionine formation. This chain is 5-methyltetrahydropteroyltriglutamate--homocysteine methyltransferase, found in Nitratidesulfovibrio vulgaris (strain ATCC 29579 / DSM 644 / CCUG 34227 / NCIMB 8303 / VKM B-1760 / Hildenborough) (Desulfovibrio vulgaris).